We begin with the raw amino-acid sequence, 123 residues long: Large ribosomal subunit protein uL14c (123 aa).

The protein belongs to the universal ribosomal protein uL14 family. As to quaternary structure, part of the 50S ribosomal subunit.

It is found in the plastid. Its subcellular location is the chloroplast. Functionally, binds to 23S rRNA. In Sorghum bicolor (Sorghum), this protein is Large ribosomal subunit protein uL14c.